We begin with the raw amino-acid sequence, 309 residues long: MSPAMNADNPGAAATAVAAIAPALKAEILAEALPYIRKFHGKTIVVKYGGNAMTEEKLKHGFARDVILLKLVGMNPVVVHGGGPQIDEALKKVGKVGTFVQGMRVTDEETMEVVEWVLGGEVQQDIVMLINQYGGQAVGLTGKDGGLIRAKRLQMPDRENPGAFIDIGYVGDIEAINPAVVKALQDDAFIPVISPIGFSDDGQAYNINADVVAGKMAEILKAEKLVMMTNIPGVMDKKGNLLTDLSAREIEELFADGTISGGMLPKISSALDAAKSGVHSVHIIDGRIEHSLLLEILTEQAFGTMIRSH.

Substrate-binding positions include 82 to 83, arginine 104, and asparagine 206; that span reads GG.

Belongs to the acetylglutamate kinase family. ArgB subfamily.

The protein localises to the cytoplasm. The catalysed reaction is N-acetyl-L-glutamate + ATP = N-acetyl-L-glutamyl 5-phosphate + ADP. It functions in the pathway amino-acid biosynthesis; L-arginine biosynthesis; N(2)-acetyl-L-ornithine from L-glutamate: step 2/4. In terms of biological role, catalyzes the ATP-dependent phosphorylation of N-acetyl-L-glutamate. The sequence is that of Acetylglutamate kinase from Cupriavidus pinatubonensis (strain JMP 134 / LMG 1197) (Cupriavidus necator (strain JMP 134)).